A 116-amino-acid polypeptide reads, in one-letter code: MVNYLSLKNNISSNLFSGHNNINQEPICVGDYIRFGLLITEGTKERTQNCEGLVIAKRFSNTCCNLTVRTVFQGIGVERTISLFSPKISKIKILKHYKVRRAKLYYLRRKENVKKK.

Belongs to the bacterial ribosomal protein bL19 family.

It is found in the plastid. The protein resides in the chloroplast. The polypeptide is Large ribosomal subunit protein bL19c (Cyanidium caldarium (Red alga)).